The chain runs to 157 residues: Transcriptional repressor NrdR (157 aa).

A zinc finger lies at 3-34 (CPFCSATDTKVIDSRLVADGHQVRRRRECLLC). One can recognise an ATP-cone domain in the interval 49-139 (PRVVKQDGSR…VYRAFEDVSE (91 aa)).

It belongs to the NrdR family. Zn(2+) is required as a cofactor.

Its function is as follows. Negatively regulates transcription of bacterial ribonucleotide reductase nrd genes and operons by binding to NrdR-boxes. The sequence is that of Transcriptional repressor NrdR from Shewanella loihica (strain ATCC BAA-1088 / PV-4).